The chain runs to 416 residues: MVRPRRAPHRSGAGGPLGGRGRPPRPLVVRAVRSRSWPAGPRGPQPPRIRARSAPPMEGARVFGALGPIGPSSPGLTLGGLAVNEHRLSNKLLAWSGVLEWQEKRRPFSDSAAKLKRTLPCQAYVNQGENLETDQWPQKLIMQLIPQQLLTTLGPLFRNSQLAQFHFTNRDCDSLKGLCRIMGNGFAGCMLFPHISPCEVRVLMLLYSSKKKIFMGLIPYDQSGFVNAIRQVITTRKQAVGPGGVHSGPVQIVNNKFLAWSGVMEWQEPRPEPNSRSKRWLPSHVYVNQGEILRTDQWPRRLFMQLIPQQLLTTLVPLFRNSRLVQFHFTKDMETLKSLCRIMDNGFAGCVHFSYKASCEVRVLMLLYSSEKKIFIGLIPHDQSNFVNGIRRVIANQQQVLQRSLEQEQQQRGMGG.

The segment at 1 to 53 is disordered; it reads MVRPRRAPHRSGAGGPLGGRGRPPRPLVVRAVRSRSWPAGPRGPQPPRIRARS. The span at 12–21 shows a compositional bias: gly residues; sequence GAGGPLGGRG. Low complexity predominate over residues 27 to 36; the sequence is LVVRAVRSRS. Ser53 carries the post-translational modification Phosphoserine. Positions 184-416 are interaction with FLOT1; sequence NGFAGCMLFP…QEQQQRGMGG (233 aa).

It belongs to the Mediator complex subunit 25 family. PTOV1 subfamily. May interact with CREBBP. Interacts with FLOT1. Post-translationally, ubiquitinated by the CRL2(KLHDC2) complex, which recognizes the diglycine (Gly-Gly) at the C-terminus, leading to its degradation. Ubiquitinated by the CRL2(APPBP2) complex, which recognizes the Arg-Xaa-Xaa-Gly sequence at the C-terminus, leading to its degradation.

The protein resides in the cytoplasm. The protein localises to the nucleus. It localises to the cell membrane. It is found in the perinuclear region. May activate transcription. Required for nuclear translocation of FLOT1. Promotes cell proliferation. In Rattus norvegicus (Rat), this protein is Prostate tumor-overexpressed gene 1 protein homolog (Ptov1).